The following is a 144-amino-acid chain: Probable DNA-directed RNA polymerases I and III subunit RPAC2 (144 aa).

Residues lysine 14–glutamate 47 are disordered. The span at glutamate 18–leucine 38 shows a compositional bias: acidic residues.

This sequence belongs to the archaeal Rpo11/eukaryotic RPB11/RPC19 RNA polymerase subunit family. In terms of assembly, component of the RNA polymerase I (Pol I) and RNA polymerase III (Pol III) complexes consisting of at least 13 and 17 subunits, respectively.

It localises to the nucleus. Its function is as follows. DNA-dependent RNA polymerase catalyzes the transcription of DNA into RNA using the four ribonucleoside triphosphates as substrates. Common core component of RNA polymerases I and III which synthesize ribosomal RNA precursors and small RNAs, such as 5S rRNA and tRNAs, respectively. The polypeptide is Probable DNA-directed RNA polymerases I and III subunit RPAC2 (rpac-19) (Caenorhabditis elegans).